The chain runs to 287 residues: Phosphate transport system permease protein PstA (287 aa).

The next 6 helical transmembrane spans lie at 22–42 (ISCIAALFGLFFLIWILWTLI), 70–90 (AFLGSAIMCLLAIVIGTPVGI), 115–135 (ILLSAPSIVLGLFVYTLYVMH), 138–158 (GHFSAFSGALALVFIVLPIVV), 199–219 (ILTGILLALARISGETAPLLF), and 255–275 (LLAWSGALVLTVFVLLVSLGA). Positions 71–279 (FLGSAIMCLL…LVSLGARALL (209 aa)) constitute an ABC transmembrane type-1 domain.

This sequence belongs to the binding-protein-dependent transport system permease family. CysTW subfamily.

It is found in the cell inner membrane. Its function is as follows. Part of a binding-protein-dependent transport system for phosphate; probably responsible for the translocation of the substrate across the membrane. The sequence is that of Phosphate transport system permease protein PstA (pstA) from Xylella fastidiosa (strain Temecula1 / ATCC 700964).